The chain runs to 272 residues: Undecaprenyl-diphosphatase (272 aa).

The next 7 helical transmembrane spans lie at 2 to 22, 43 to 63, 82 to 102, 110 to 130, 185 to 205, 224 to 244, and 252 to 272; these read FDII…FLPI, FISM…VLLY, WQLW…GLPL, LHTP…FIIL, YVAT…VLII, VLMT…KWLL, and FKPF…VMFI.

This sequence belongs to the UppP family.

Its subcellular location is the cell membrane. The catalysed reaction is di-trans,octa-cis-undecaprenyl diphosphate + H2O = di-trans,octa-cis-undecaprenyl phosphate + phosphate + H(+). In terms of biological role, catalyzes the dephosphorylation of undecaprenyl diphosphate (UPP). Confers resistance to bacitracin. The sequence is that of Undecaprenyl-diphosphatase from Lacticaseibacillus casei (strain BL23) (Lactobacillus casei).